We begin with the raw amino-acid sequence, 96 residues long: Small ribosomal subunit protein bS18 (96 aa).

Positions 1–18 (MPPPRGKGRFGKDKRPKR) are enriched in basic residues. Residues 1 to 21 (MPPPRGKGRFGKDKRPKRNTQ) are disordered.

It belongs to the bacterial ribosomal protein bS18 family. Part of the 30S ribosomal subunit. Forms a tight heterodimer with protein bS6.

Functionally, binds as a heterodimer with protein bS6 to the central domain of the 16S rRNA, where it helps stabilize the platform of the 30S subunit. In Methylibium petroleiphilum (strain ATCC BAA-1232 / LMG 22953 / PM1), this protein is Small ribosomal subunit protein bS18.